Here is a 197-residue protein sequence, read N- to C-terminus: ADP-ribosylation factor-like protein 6-interacting protein 1 (197 aa).

Helical transmembrane passes span 43 to 63 (VVFGVISCLYLVLWYLDLSLI), 64 to 84 (TLLSLLGVISILLNYAFPMVS), 129 to 149 (TVFVIVMSLGLLAMAWIGAII), and 150 to 170 (NNLLLMYLATLLILMWPGLQN).

The protein belongs to the ARL6ip family.

The protein localises to the membrane. The chain is ADP-ribosylation factor-like protein 6-interacting protein 1 from Drosophila melanogaster (Fruit fly).